A 148-amino-acid chain; its full sequence is Small ribosomal subunit protein uS15 (148 aa).

Basic residues predominate over residues 1 to 14; the sequence is MGRLHSHRHGKSHS. Residues 1–27 are disordered; the sequence is MGRLHSHRHGKSHSIRPSSPKAPSWIQ.

The protein belongs to the universal ribosomal protein uS15 family. As to quaternary structure, part of the 30S ribosomal subunit.

This chain is Small ribosomal subunit protein uS15, found in Cenarchaeum symbiosum (strain A).